A 708-amino-acid polypeptide reads, in one-letter code: Leukotoxin translocation ATP-binding protein LktB (708 aa).

The 126-residue stretch at 1–126 (MEANHQRNDL…ACYQGQLILV (126 aa)) folds into the Peptidase C39 domain. The ABC transmembrane type-1 domain occupies 155-437 (FLETLIVSIF…LAQLWQDFQQ (283 aa)). The next 5 helical transmembrane spans lie at 159–179 (LIVS…FQVV), 192–212 (LNII…LSGL), 270–290 (ALTS…MWYY), 296–316 (LVIL…SPIL), and 389–409 (VMVI…LSIG). The region spanning 469-704 (ISFKNIRFRY…SNGLYSYLHQ (236 aa)) is the ABC transporter domain. 503-510 (GRSGSGKS) serves as a coordination point for ATP.

The protein belongs to the ABC transporter superfamily. Protein-1 exporter (TC 3.A.1.109) family. As to quaternary structure, homodimer.

The protein localises to the cell inner membrane. The enzyme catalyses ATP + H2O + proteinSide 1 = ADP + phosphate + proteinSide 2.. Part of the ABC transporter complex LktBD involved in leukotoxin export. Transmembrane domains (TMD) form a pore in the inner membrane and the ATP-binding domain (NBD) is responsible for energy generation. This Mannheimia haemolytica (Pasteurella haemolytica) protein is Leukotoxin translocation ATP-binding protein LktB (lktB).